A 167-amino-acid chain; its full sequence is Inclusion membrane protein G (167 aa).

The next 2 helical transmembrane spans lie at 33–57 (VVLA…AVLF) and 63–88 (VLPY…LRSL). Residues 94 to 167 (SCKKRSPEEI…DNSRSRSRSF (74 aa)) form a sufficient for interaction with human 14-3-3 beta protein region. Residues 97 to 167 (KRSPEEIEGA…DNSRSRSRSF (71 aa)) are disordered. Positions 122 to 135 (ESASPQASPTSSTL) are enriched in low complexity. Residues 161-166 (RSRSRS) carry the Phosphorylation-dependent binding motif motif. Ser166 bears the Phosphoserine mark.

As to quaternary structure, in infected HeLa cells colocalizes with host 14-3-3 protein (YWHAB); phosphorylation of Ser-166 is probably required. Interacts with Pkn1. Phosphorylated, possibly at more than one position, in infected HeLa cells. Phosphorylated by chlamydial kinase Pnk1.

Its subcellular location is the secreted. It is found in the host vacuole. The protein localises to the host pathogen-containing vacuole. It localises to the host pathogen-containing vacuole membrane. In terms of biological role, inclusion membrane protein probably involved in early modification events of the chlamydial inclusion. The polypeptide is Inclusion membrane protein G (Chlamydia trachomatis serovar L2 (strain ATCC VR-902B / DSM 19102 / 434/Bu)).